Consider the following 232-residue polypeptide: Uracil-DNA glycosylase (232 aa).

D70 serves as the catalytic Proton acceptor.

The protein belongs to the uracil-DNA glycosylase (UDG) superfamily. UNG family.

The protein localises to the cytoplasm. It carries out the reaction Hydrolyzes single-stranded DNA or mismatched double-stranded DNA and polynucleotides, releasing free uracil.. Its function is as follows. Excises uracil residues from the DNA which can arise as a result of misincorporation of dUMP residues by DNA polymerase or due to deamination of cytosine. This chain is Uracil-DNA glycosylase, found in Campylobacter fetus subsp. fetus (strain 82-40).